A 752-amino-acid polypeptide reads, in one-letter code: Catalase-peroxidase 1 (752 aa).

The tract at residues 1-45 is disordered; it reads MPPNTPDASDARPPQADTETHSHSESENPVIESPKPKAHAPLTNQ. The segment at residues 116–244 is a cross-link (tryptophyl-tyrosyl-methioninium (Trp-Tyr) (with M-270)); it reads WHAAGTYRIF…YGATTMGLIY (129 aa). The Proton acceptor role is filled by His-117. The tryptophyl-tyrosyl-methioninium (Tyr-Met) (with W-116) cross-link spans 244–270; that stretch reads YVNPEGPEGKPDPLAAAHDIRETFGRM. His-285 contributes to the heme b binding site.

The protein belongs to the peroxidase family. Peroxidase/catalase subfamily. In terms of assembly, homodimer or homotetramer. The cofactor is heme b. Post-translationally, formation of the three residue Trp-Tyr-Met cross-link is important for the catalase, but not the peroxidase activity of the enzyme.

The enzyme catalyses H2O2 + AH2 = A + 2 H2O. It carries out the reaction 2 H2O2 = O2 + 2 H2O. Its function is as follows. Bifunctional enzyme with both catalase and broad-spectrum peroxidase activity. May play a role in the intracellular survival of mycobacteria. This is Catalase-peroxidase 1 from Mycolicibacterium fortuitum (Mycobacterium fortuitum).